Consider the following 365-residue polypeptide: Protein YIM1 (365 aa).

It belongs to the YIM1 family.

It localises to the lipid droplet. Its subcellular location is the mitochondrion. This Saccharomyces cerevisiae (strain ATCC 204508 / S288c) (Baker's yeast) protein is Protein YIM1 (YIM1).